The chain runs to 347 residues: D-alanine--D-alanine ligase (347 aa).

The ATP-grasp domain maps to 131–333; that stretch reads KRVLESAGIA…YPELIERLVD (203 aa). 161 to 216 lines the ATP pocket; the sequence is EEKLAYPVFTKPSNMGSSVGISKSENQEELRPALELAFRYDSRVLVEQGVNAREIE. Mg(2+)-binding residues include Asp287, Glu300, and Asn302.

It belongs to the D-alanine--D-alanine ligase family. It depends on Mg(2+) as a cofactor. Requires Mn(2+) as cofactor.

It is found in the cytoplasm. The catalysed reaction is 2 D-alanine + ATP = D-alanyl-D-alanine + ADP + phosphate + H(+). The protein operates within cell wall biogenesis; peptidoglycan biosynthesis. Functionally, cell wall formation. This Streptococcus pneumoniae (strain Taiwan19F-14) protein is D-alanine--D-alanine ligase.